Consider the following 339-residue polypeptide: U11/U12 small nuclear ribonucleoprotein 48 kDa protein (339 aa).

The CHHC U11-48K-type zinc-finger motif lies at 55–82 (VVICPYDSNHHMPKSSLAKHMASCRLRK). Positions 58, 64, 74, and 78 each coordinate Zn(2+). Residues K87 and K104 each participate in a glycyl lysine isopeptide (Lys-Gly) (interchain with G-Cter in SUMO2) cross-link. The tract at residues 255–339 (HWQEEQEKAE…HSHKRRKQKI (85 aa)) is disordered. The span at 294–309 (RHRRDRSRSPHKRKRN) shows a compositional bias: basic residues. A compositionally biased stretch (basic and acidic residues) spans 310–328 (KDKDKNCESRRRKERDGER). Positions 329 to 339 (HHSHKRRKQKI) are enriched in basic residues.

As to quaternary structure, component of the U11/U12 snRNPs that are part of the U12-type spliceosome. Not found in the major spliceosome.

Its subcellular location is the nucleus. Functionally, likely involved in U12-type 5' splice site recognition. The protein is U11/U12 small nuclear ribonucleoprotein 48 kDa protein (SNRNP48) of Homo sapiens (Human).